The primary structure comprises 4730 residues: Dynein heavy chain, cytoplasmic (4730 aa).

2 disordered regions span residues 1-23 (MEDQ…VVTP) and 91-120 (TINS…QQQS). A stem region spans residues 1–1935 (MEDQQINVDS…VIHMANATFY (1935 aa)). Residues 10–23 (SPTSGTNTPPVVTP) are compositionally biased toward low complexity. A coiled-coil region spans residues 867 to 900 (VRKLSTSINNFRDKVDDLIVKYSEIKKQLDGLKS). Residues 964–1016 (EDQKDSQSTSGSSNKGGKLNRMNYSIRNKSDEENSSDLTQPQQSQQQQQTISI) form a disordered region. A compositionally biased stretch (polar residues) spans 969 to 978 (SQSTSGSSNK). A compositionally biased stretch (low complexity) spans 1002 to 1016 (TQPQQSQQQQQTISI). 4 coiled-coil regions span residues 1204–1224 (EKMN…EKLS), 1343–1372 (ALET…QALD), 1425–1441 (RKVR…LKNL), and 1661–1689 (AIER…YLER). AAA regions lie at residues 1936–2158 (YGFE…VLVS), 2238–2531 (KKIQ…FTRL), 2635–2885 (EVET…WDRA), and 2978–3252 (VFYE…QGRQ). An ATP-binding site is contributed by 1974–1981 (GPAGTGKT). The stretch at 2231–2253 (IQMDQLRKKIQEIAKQRHLVTKQ) forms a coiled coil. 2276 to 2283 (GPSGGGKT) lines the ATP pocket. A disordered region spans residues 2437–2486 (EPFDPQEKEQQKRNENAQLQQQQQTTITSPILTSPPTTSSSSRSTTSTTS). Positions 2441–2451 (PQEKEQQKRNE) are enriched in basic and acidic residues. Positions 2442-2462 (QEKEQQKRNENAQLQQQQQTT) form a coiled coil. The segment covering 2454–2486 (QLQQQQQTTITSPILTSPPTTSSSSRSTTSTTS) has biased composition (low complexity). ATP-binding positions include 2674–2681 (GPPGSGKT) and 3016–3023 (GVSGGGKS). Coiled coils occupy residues 3271–3349 (INEK…VQLD), 3483–3585 (AQTY…NTQM), and 3854–3881 (TLET…EISE). The stalk stretch occupies residues 3271-3585 (INEKRDQLEE…QQSENFNTQM (315 aa)). AAA regions lie at residues 3638-3867 (LSKP…EIAL) and 4098-4312 (SHSF…SIDY). Residues 4432-4465 (KMQSSEEDGEDDQVSGSSKKESSSSSSEDKGKAK) are disordered. Residues 4449-4463 (SKKESSSSSSEDKGK) are compositionally biased toward basic and acidic residues.

It belongs to the dynein heavy chain family. In terms of assembly, consists of at least two heavy chains and a number of intermediate and light chains.

The protein localises to the cytoplasm. It localises to the cytoskeleton. Functionally, cytoplasmic dynein acts as a motor for the intracellular retrograde motility of vesicles and organelles along microtubules. Dynein has ATPase activity; the force-producing power stroke is thought to occur on release of ADP. This is Dynein heavy chain, cytoplasmic (dhcA) from Dictyostelium discoideum (Social amoeba).